The chain runs to 378 residues: UPF0754 membrane protein Exig_0680 (378 aa).

The next 2 helical transmembrane spans lie at 5–25 (VDLV…GAVT) and 357–377 (ITWL…ILLI).

It belongs to the UPF0754 family.

It is found in the cell membrane. In Exiguobacterium sibiricum (strain DSM 17290 / CCUG 55495 / CIP 109462 / JCM 13490 / 255-15), this protein is UPF0754 membrane protein Exig_0680.